Consider the following 66-residue polypeptide: Metallothionein-like protein type 3 (66 aa).

Belongs to the metallothionein superfamily. Type 15 family.

Metallothioneins have a high content of cysteine residues that bind various heavy metals. The protein is Metallothionein-like protein type 3 (MT2) of Malus domestica (Apple).